The primary structure comprises 480 residues: Acetyl-coenzyme A carboxylase carboxyl transferase subunit beta, chloroplastic (480 aa).

The disordered stretch occupies residues 25–48; it reads TSSLGPIENASESKDPNINDTDKN. A compositionally biased stretch (basic and acidic residues) spans 35–47; it reads SESKDPNINDTDK. Positions 216 to 480 constitute a CoA carboxyltransferase N-terminal domain; that stretch reads LWVQCENCYG…LHTFFPLNQN (265 aa). Cysteine 220, cysteine 223, cysteine 239, and cysteine 242 together coordinate Zn(2+). Residues 220–242 form a C4-type zinc finger; that stretch reads CENCYGLNYKKFFKSKMNLCEQC.

It belongs to the AccD/PCCB family. Acetyl-CoA carboxylase is a heterohexamer composed of biotin carboxyl carrier protein, biotin carboxylase and 2 subunits each of ACCase subunit alpha and ACCase plastid-coded subunit beta (accD). Zn(2+) is required as a cofactor.

The protein resides in the plastid. The protein localises to the chloroplast stroma. It carries out the reaction N(6)-carboxybiotinyl-L-lysyl-[protein] + acetyl-CoA = N(6)-biotinyl-L-lysyl-[protein] + malonyl-CoA. The protein operates within lipid metabolism; malonyl-CoA biosynthesis; malonyl-CoA from acetyl-CoA: step 1/1. Functionally, component of the acetyl coenzyme A carboxylase (ACC) complex. Biotin carboxylase (BC) catalyzes the carboxylation of biotin on its carrier protein (BCCP) and then the CO(2) group is transferred by the transcarboxylase to acetyl-CoA to form malonyl-CoA. The protein is Acetyl-coenzyme A carboxylase carboxyl transferase subunit beta, chloroplastic of Helianthus annuus (Common sunflower).